The primary structure comprises 153 residues: Ribosome maturation factor RimP (153 aa).

This sequence belongs to the RimP family.

The protein resides in the cytoplasm. Its function is as follows. Required for maturation of 30S ribosomal subunits. This chain is Ribosome maturation factor RimP, found in Synechococcus elongatus (strain ATCC 33912 / PCC 7942 / FACHB-805) (Anacystis nidulans R2).